The sequence spans 218 residues: UPF0329 protein ECU10_1860 (218 aa).

This sequence belongs to the UPF0329 family.

The sequence is that of UPF0329 protein ECU10_1860 from Encephalitozoon cuniculi (strain GB-M1) (Microsporidian parasite).